The chain runs to 1244 residues: Ras-specific guanine nucleotide-releasing factor 2 (1244 aa).

Positions 22–129 constitute a PH 1 domain; it reads EGTKRGYLSK…WVEAIQQASY (108 aa). Positions 147–189 form a coiled coil; sequence VQIVETEKVAANQLRTQLEDQDTEIERLKAEIIALNKTKERMR. The IQ domain occupies 201-230; the sequence is DIKKIKKVQSFMRGWLCRRKWKIIVQDYIC. The 187-residue stretch at 239–425 folds into the DH domain; the sequence is KRNQIVFNMV…EELSRVMHDE (187 aa). Residues 466–584 form the PH 2 domain; that stretch reads PSVERGKLSK…WTSDISQCID (119 aa). The N-terminal Ras-GEF domain occupies 631-745; it reads KVPQIRYASV…PVRTRKLSLN (115 aa). Disordered stretches follow at residues 704 to 743, 759 to 814, and 843 to 879; these read NRSG…RKLS, TTSS…NAEV, and PESP…AENS. A compositionally biased stretch (basic and acidic residues) spans 706–715; it reads SGDHVNDKSP. The segment covering 728–743 has biased composition (polar residues); it reads SISSRTSSPVRTRKLS. 2 stretches are compositionally biased toward low complexity: residues 759-774 and 781-806; these read TTSS…ANPT and NNNN…QSPG. The Ras-GEF domain maps to 1009–1241; that stretch reads SAMEIAEQIT…YDLSLKIEPR (233 aa).

It is found in the cytoplasm. It localises to the cell membrane. Its subcellular location is the endoplasmic reticulum membrane. Functionally, functions as a calcium-regulated nucleotide exchange factor activating both Ras and rac1 through the exchange of bound GDP for GTP. May function in synaptic plasticity. This Danio rerio (Zebrafish) protein is Ras-specific guanine nucleotide-releasing factor 2 (rasgrf2).